The sequence spans 352 residues: MVFRIASSPYTHNQRQTSRIMLLVLLAAVPGIAAQLCFFGWGTLVQILLASVSALLAEALVLKLRKQSVAATLKDNSALLTGLLLAVSIPPLAPWWMVVLGTVFAVIIAKQLYGGLGQNPFNPAMIGYVVLLISFPVQMTSWLPPHEIAVNIPGFIDAIQVIFSGHTASGGDMNTLRLGIDGISQATPLDTFKTSVRAGHSVEEIMQYPIYSGMLAGAGWQWVNLAWLAGGVWLLWQKAIRWHIPLSFLVTLALCATLGWLFSPDTLAAPQIHLLSGATMLGAFFILTDPVTASTTNRGRLIFGALAGLLVWLIRSFGGYPDGVAFAVLLANITVPLIDYYTRPRVYGHRKG.

The next 4 helical transmembrane spans lie at 20-40, 42-62, 89-109, and 123-143; these read IMLL…CFFG, GTLV…ALVL, IPPL…VIIA, and PAMI…TSWL. An FMN phosphoryl threonine modification is found at threonine 187. 5 helical membrane-spanning segments follow: residues 215 to 235, 242 to 262, 267 to 287, 301 to 321, and 322 to 342; these read LAGA…VWLL, WHIP…GWLF, LAAP…FFIL, LIFG…GGYP, and DGVA…DYYT.

The protein belongs to the NqrB/RnfD family. In terms of assembly, the complex is composed of six subunits: RsxA, RsxB, RsxC, RsxD, RsxE and RsxG. Requires FMN as cofactor.

The protein localises to the cell inner membrane. Functionally, part of a membrane-bound complex that couples electron transfer with translocation of ions across the membrane. Required to maintain the reduced state of SoxR. This Escherichia coli O7:K1 (strain IAI39 / ExPEC) protein is Ion-translocating oxidoreductase complex subunit D.